Consider the following 433-residue polypeptide: MSKIVKVLGREIIDSRGNPTVEAEVHLEGGFVGMAAAPSGASTGSREALELRDGDKSRFLGKGVLKALEAVNGPIAEALLGKDATDQAAIDQVMIDLDGTENKSKFGANAILAVSLANAKAGAAAKGMPLYEHIAELNGTAGQFSMPLPMMNIINGGEHADNNVDIQEFMIQPVGAKTFREAVRIGAEVFHNLAKVLKAKGLSTAVGDEGGFAPNLESNAAALAAIKEAVEAAGYELGKDVTLAMDCAASEFYDKEAGNYNMKGEGKIFTSEEFNFYLQDLANQYPIVSIEDGLDESDWAGFKHQTELLGDKLQIVGDDLFVTNTKILAEGIEKGVANSILIKFNQIGSLTETLAAIKMAKDAGYTAVISHRSGETEDATIADLAVGTAAGQIKTGSMSRSDRVAKYNQLLRIEEALGAKAPFNGLKEVKGQA.

Gln167 is a binding site for (2R)-2-phosphoglycerate. Glu209 functions as the Proton donor in the catalytic mechanism. Positions 246, 291, and 318 each coordinate Mg(2+). (2R)-2-phosphoglycerate is bound by residues Lys343, Arg372, Ser373, and Lys394. The active-site Proton acceptor is the Lys343.

It belongs to the enolase family. Component of the RNA degradosome, a multiprotein complex involved in RNA processing and mRNA degradation. Mg(2+) serves as cofactor.

Its subcellular location is the cytoplasm. The protein localises to the secreted. The protein resides in the cell surface. The enzyme catalyses (2R)-2-phosphoglycerate = phosphoenolpyruvate + H2O. It functions in the pathway carbohydrate degradation; glycolysis; pyruvate from D-glyceraldehyde 3-phosphate: step 4/5. Its function is as follows. Catalyzes the reversible conversion of 2-phosphoglycerate (2-PG) into phosphoenolpyruvate (PEP). It is essential for the degradation of carbohydrates via glycolysis. The protein is Enolase of Photobacterium profundum (strain SS9).